Consider the following 134-residue polypeptide: ATP synthase epsilon chain, chloroplastic (134 aa).

It belongs to the ATPase epsilon chain family. F-type ATPases have 2 components, CF(1) - the catalytic core - and CF(0) - the membrane proton channel. CF(1) has five subunits: alpha(3), beta(3), gamma(1), delta(1), epsilon(1). CF(0) has three main subunits: a, b and c.

The protein resides in the plastid. The protein localises to the chloroplast thylakoid membrane. Produces ATP from ADP in the presence of a proton gradient across the membrane. The protein is ATP synthase epsilon chain, chloroplastic of Amborella trichopoda.